The sequence spans 372 residues: MAHAPASCPSSRNSGDGDKGKPRKVALITGITGQDGSYLAEFLLEKGYEVHGIVRRSSSFNTGRIEHLYKNPQAHIEGNMKLHYGDLTDSTCLVKIINEVKPTEIYNLGAQSHVKISFDLAEYTADVDGVGTLRLLDAIKTCGLINSVKFYQASTSELYGKVQEIPQKETTPFYPRSPYGAAKLYAYWIVVNFREAYNLFAVNGILFNHESPRRGANFVTRKISRSVAKIYLGQLECFSLGNLDAKRDWGHAKDYVEAMWLMLQNDEPEDFVIATGEVHSVREFVEKSFMHIGKTIVWEGKNENEVGRCKETGKIHVTVDLKYYRPTEVDFLQGDCSKAQQKLNWKPRVAFDELVREMVQADVELMRTNPNA.

The disordered stretch occupies residues 1-22; the sequence is MAHAPASCPSSRNSGDGDKGKP. N-acetylalanine is present on Ala-2. NADP(+) contacts are provided by residues 30 to 35, 55 to 58, 86 to 87, 108 to 112, and Tyr-123; these read GITGQD, RRSS, DL, and LGAQS. Thr-155 is an active-site residue. Residues Glu-157 and Tyr-179 each act as nucleophile in the active site. NADP(+)-binding residues include Lys-183, His-209, and Arg-214. At Tyr-323 the chain carries Phosphotyrosine.

The protein belongs to the NAD(P)-dependent epimerase/dehydratase family. GDP-mannose 4,6-dehydratase subfamily. Requires NADP(+) as cofactor.

It carries out the reaction GDP-alpha-D-mannose = GDP-4-dehydro-alpha-D-rhamnose + H2O. It functions in the pathway nucleotide-sugar biosynthesis; GDP-L-fucose biosynthesis via de novo pathway; GDP-L-fucose from GDP-alpha-D-mannose: step 1/2. Inhibited by GDP-fucose. Its function is as follows. Catalyzes the conversion of GDP-D-mannose to GDP-4-dehydro-6-deoxy-D-mannose. The protein is GDP-mannose 4,6 dehydratase (GMDS) of Cricetulus griseus (Chinese hamster).